We begin with the raw amino-acid sequence, 124 residues long: Small ribosomal subunit protein bS16 (124 aa).

A compositionally biased stretch (basic residues) spans 81-90 (LKKRPARNNP). A disordered region spans residues 81-124 (LKKRPARNNPHKGEPGKKAQERIAAAKQAAEDAAAAAEADSASE). Residues 91 to 101 (HKGEPGKKAQE) are compositionally biased toward basic and acidic residues. Low complexity predominate over residues 102–124 (RIAAAKQAAEDAAAAAEADSASE).

It belongs to the bacterial ribosomal protein bS16 family.

The polypeptide is Small ribosomal subunit protein bS16 (Bartonella tribocorum (strain CIP 105476 / IBS 506)).